The chain runs to 252 residues: D-aminoacyl-tRNA deacylase (252 aa).

This sequence belongs to the DtdA deacylase family. Monomer. Zn(2+) is required as a cofactor.

The catalysed reaction is a D-aminoacyl-tRNA + H2O = a tRNA + a D-alpha-amino acid + H(+). The enzyme catalyses glycyl-tRNA(Ala) + H2O = tRNA(Ala) + glycine + H(+). Its function is as follows. D-aminoacyl-tRNA deacylase with broad substrate specificity. By recycling D-aminoacyl-tRNA to D-amino acids and free tRNA molecules, this enzyme counteracts the toxicity associated with the formation of D-aminoacyl-tRNA entities in vivo. In Pyrobaculum neutrophilum (strain DSM 2338 / JCM 9278 / NBRC 100436 / V24Sta) (Thermoproteus neutrophilus), this protein is D-aminoacyl-tRNA deacylase.